The primary structure comprises 318 residues: NADH-ubiquinone oxidoreductase chain 1 (318 aa).

Transmembrane regions (helical) follow at residues 2–22 (FMIN…FLTL), 70–90 (MFII…IPLP), 100–120 (LGIL…LWSG), 147–167 (AIIL…TLII), 171–191 (YLWL…STLA), 217–237 (AGPF…MNIF), 253–273 (ELYS…FLWI), and 294–314 (LPLT…LSSI).

Belongs to the complex I subunit 1 family. As to quaternary structure, core subunit of respiratory chain NADH dehydrogenase (Complex I) which is composed of 45 different subunits.

The protein resides in the mitochondrion inner membrane. The enzyme catalyses a ubiquinone + NADH + 5 H(+)(in) = a ubiquinol + NAD(+) + 4 H(+)(out). Core subunit of the mitochondrial membrane respiratory chain NADH dehydrogenase (Complex I) which catalyzes electron transfer from NADH through the respiratory chain, using ubiquinone as an electron acceptor. Essential for the catalytic activity and assembly of complex I. The protein is NADH-ubiquinone oxidoreductase chain 1 (MT-ND1) of Equus caballus (Horse).